Consider the following 274-residue polypeptide: Oxidized low-density lipoprotein receptor 1 (274 aa).

The disordered stretch occupies residues 1 to 28; that stretch reads MTLDDLKSNSMKDQPDEKSNGDKAEGPR. At 1–37 the chain is on the cytoplasmic side; it reads MTLDDLKSNSMKDQPDEKSNGDKAEGPRSLSTLRWRP. Basic and acidic residues predominate over residues 13 to 26; sequence DQPDEKSNGDKAEG. A helical; Signal-anchor for type II membrane protein membrane pass occupies residues 38–60; sequence AALILGLLCLGLLVTVILLIIQL. A lipid anchor (S-palmitoyl cysteine) is attached at cysteine 46. Residues 61 to 150 are neck; that stretch reads SQVSDLLKQQ…SGPCPQDWLW (90 aa). Over 61–274 the chain is Extracellular; sequence SQVSDLLKQQ…QKRANLLRAQ (214 aa). The stretch at 89-142 forms a coiled coil; that stretch reads RQAEKSSQESQRELTEMIETLAHKLDEKSKKLMELQQQNLNLQKALEKAANFSG. The N-linked (GlcNAc...) asparagine glycan is linked to asparagine 139. 3 disulfide bridges follow: cysteine 144/cysteine 155, cysteine 172/cysteine 264, and cysteine 243/cysteine 256. A C-type lectin domain is found at 151-265; the sequence is HEENCYKFSS…CILNAFSICQ (115 aa).

In terms of assembly, homodimer; disulfide-linked. May form a hexamer composed of 3 homodimers. Interacts with HSP70. Post-translationally, N-glycosylated.

It is found in the cell membrane. It localises to the membrane raft. Its subcellular location is the secreted. Receptor that mediates the recognition, internalization and degradation of oxidatively modified low density lipoprotein (oxLDL) by vascular endothelial cells. OxLDL is a marker of atherosclerosis that induces vascular endothelial cell activation and dysfunction, resulting in pro-inflammatory responses, pro-oxidative conditions and apoptosis. Its association with oxLDL induces the activation of NF-kappa-B through an increased production of intracellular reactive oxygen and a variety of pro-atherogenic cellular responses including a reduction of nitric oxide (NO) release, monocyte adhesion and apoptosis. In addition to binding oxLDL, it acts as a receptor for the HSP70 protein involved in antigen cross-presentation to naive T-cells in dendritic cells, thereby participating in cell-mediated antigen cross-presentation. Also involved in inflammatory process, by acting as a leukocyte-adhesion molecule at the vascular interface in endotoxin-induced inflammation. Also acts as a receptor for advanced glycation end (AGE) products, activated platelets, monocytes, apoptotic cells and both Gram-negative and Gram-positive bacteria. In Sus scrofa (Pig), this protein is Oxidized low-density lipoprotein receptor 1 (OLR1).